We begin with the raw amino-acid sequence, 280 residues long: Small ribosomal subunit protein uS15m (280 aa).

The protein belongs to the universal ribosomal protein uS15 family. In terms of assembly, component of the mitochondrial ribosome small subunit (28S) which comprises a 12S rRNA and about 30 distinct proteins. In terms of tissue distribution, expressed in anterior and posterior midgut primordia in stage 11 embryos. In stage 13 embryos, expression is high in the developing midgut and hindgut. In stage 16 embryos, expression is elevated in the midgut, hindgut, and in a small region that will give rise to pharyngeal muscles and to the stomatogastric nervous system. In larvae, expression is predominant in the gut, and head, presumably in pharyngeal muscles.

Its subcellular location is the mitochondrion. Functionally, essential for gut mitochondrial activity. Might be involved in tissue specific growth factor production. The protein is Small ribosomal subunit protein uS15m (bonsai) of Drosophila melanogaster (Fruit fly).